We begin with the raw amino-acid sequence, 753 residues long: Nibrin (753 aa).

The FHA domain occupies 22 to 81 (YVVGRKNCAFLIQDDQSISRSHAVLTVSRPETTHSQSVSVPVLTIKDTSKYGTFVNGSKL). BRCT domains follow at residues 101 to 191 (SKFR…PTPE) and 221 to 311 (GKTF…LAVI). S274 carries the phosphoserine modification. Phosphoserine; by ATM is present on S343. A disordered region spans residues 442–606 (RECTPRQQSN…NTKQREENEM (165 aa)). Residues 446–455 (PRQQSNSITN) show a composition bias toward polar residues. The Nuclear localization signal motif lies at 461 to 467 (RKRERAE). Residues 490-500 (CTESSASSAWN) are compositionally biased toward polar residues. Residues 517 to 528 (ESGELASDKTDI) are compositionally biased toward basic and acidic residues. The segment covering 568-577 (QTANGDQEAQ) has biased composition (polar residues). Basic and acidic residues predominate over residues 585–606 (CLETKGSRTEEGNTKQREENEM). Residues 739–748 (ADDLFRYDPN) carry the FxF/Y motif motif.

It belongs to the Nibrin family. In terms of assembly, component of the MRN complex composed of two heterodimers RAD50 and mre11 associated with a single NBN.

Its subcellular location is the nucleus. It is found in the chromosome. It localises to the PML body. The protein localises to the telomere. Functionally, component of the MRN complex, which plays a central role in double-strand break (DSB) repair, DNA recombination, maintenance of telomere integrity and meiosis. The MRN complex is involved in the repair of DNA double-strand breaks (DSBs) via homologous recombination (HR), an error-free mechanism which primarily occurs during S and G2 phases. The complex (1) mediates the end resection of damaged DNA, which generates proper single-stranded DNA, a key initial steps in HR, and is (2) required for the recruitment of other repair factors and efficient activation of ATM and ATR upon DNA damage. The MRN complex possesses single-strand endonuclease activity and double-strand-specific 3'-5' exonuclease activity, which are provided by MRE11, to initiate end resection, which is required for single-strand invasion and recombination. Within the MRN complex, NBN acts as a protein-protein adapter, which specifically recognizes and binds phosphorylated proteins, promoting their recruitment to DNA damage sites. Recruits MRE11 and RAD50 components of the MRN complex to DSBs in response to DNA damage. Promotes the recruitment of PI3/PI4-kinase family members ATM, ATR, and probably DNA-PKcs to the DNA damage sites, activating their functions. Mediates the recruitment of phosphorylated RBBP8/CtIP to DSBs, leading to cooperation between the MRN complex and RBBP8/CtIP to initiate end resection. The MRN complex and rbbp8/CtIP are also required for chromosome alignment during metaphase. The polypeptide is Nibrin (NBN) (Gallus gallus (Chicken)).